We begin with the raw amino-acid sequence, 147 residues long: Hemoglobin subunit epsilon (147 aa).

Residues 3 to 147 form the Globin domain; sequence HFTAEEKAAV…VAIALAHKYH (145 aa). Phosphoserine is present on residues serine 14 and serine 51. 2 residues coordinate heme b: histidine 64 and histidine 93.

It belongs to the globin family. In terms of assembly, heterotetramer of two alpha chains and two epsilon chains in early embryonic hemoglobin Gower-2; two zeta chains and two epsilon chains in early embryonic hemoglobin Gower-1. Red blood cells.

Functionally, the epsilon chain is a beta-type chain of early mammalian embryonic hemoglobin. This chain is Hemoglobin subunit epsilon (HBE1), found in Pan troglodytes (Chimpanzee).